The chain runs to 342 residues: Protein-glutamate methylesterase/protein-glutamine glutaminase 3 (342 aa).

The 118-residue stretch at 3–120 (RVLVVEDMPT…SPGFADDARR (118 aa)) folds into the Response regulatory domain. Aspartate 54 is subject to 4-aspartylphosphate. Residues 152-342 (DVPRGRVVAV…ADRLALWLRR (191 aa)) enclose the CheB-type methylesterase domain. Catalysis depends on residues serine 164, histidine 191, and aspartate 285.

This sequence belongs to the CheB family. Phosphorylated by CheA. Phosphorylation of the N-terminal regulatory domain activates the methylesterase activity.

It localises to the cytoplasm. The enzyme catalyses [protein]-L-glutamate 5-O-methyl ester + H2O = L-glutamyl-[protein] + methanol + H(+). The catalysed reaction is L-glutaminyl-[protein] + H2O = L-glutamyl-[protein] + NH4(+). Involved in chemotaxis. Part of a chemotaxis signal transduction system that modulates chemotaxis in response to various stimuli. Catalyzes the demethylation of specific methylglutamate residues introduced into the chemoreceptors (methyl-accepting chemotaxis proteins or MCP) by CheR. Also mediates the irreversible deamidation of specific glutamine residues to glutamic acid. The polypeptide is Protein-glutamate methylesterase/protein-glutamine glutaminase 3 (Anaeromyxobacter dehalogenans (strain 2CP-C)).